Reading from the N-terminus, the 65-residue chain is MAVQKSRKTPSKRGMRRSHNALTNPTLSEDQETGEIHLRHHITVDGYYRGKKVIKKTQDIQEINA.

Residues 1–19 show a composition bias toward basic residues; sequence MAVQKSRKTPSKRGMRRSH. The interval 1 to 32 is disordered; it reads MAVQKSRKTPSKRGMRRSHNALTNPTLSEDQE.

It belongs to the bacterial ribosomal protein bL32 family.

In Ruthia magnifica subsp. Calyptogena magnifica, this protein is Large ribosomal subunit protein bL32.